Reading from the N-terminus, the 115-residue chain is MAVRYELAIGLNKGHKTSKIRNVKYTGDKKVKGLRGSRLKNIQTRHTKFMRDLVREVVGHAPYEKRTMELLKVSKDKRALKFLKRRLGTHIRAKRKREELSNILTQLRKAQTHAK.

This sequence belongs to the eukaryotic ribosomal protein eL36 family. As to quaternary structure, component of the large ribosomal subunit.

It localises to the cytoplasm. The protein resides in the cytosol. Component of the large ribosomal subunit. The protein is Large ribosomal subunit protein eL36 (RpL36) of Drosophila melanogaster (Fruit fly).